We begin with the raw amino-acid sequence, 101 residues long: Replication restart protein PriB (101 aa).

The region spanning 1–101 (MATNHLVLSG…LHAENVELKT (101 aa)) is the SSB domain.

The protein belongs to the PriB family. Homodimer. Interacts with PriA and DnaT. Component of the replication restart primosome. Primosome assembly occurs via a 'hand-off' mechanism. PriA binds to replication forks, subsequently PriB then DnaT bind; DnaT then displaces ssDNA to generate the helicase loading substrate.

Involved in the restart of stalled replication forks, which reloads the replicative helicase on sites other than the origin of replication; the PriA-PriB pathway is the major replication restart pathway. During primosome assembly it facilitates complex formation between PriA and DnaT on DNA; stabilizes PriA on DNA. Stimulates the DNA unwinding activity of PriA helicase. The polypeptide is Replication restart protein PriB (Shewanella sediminis (strain HAW-EB3)).